A 1163-amino-acid chain; its full sequence is Guanylate cyclase 32E (1163 aa).

Residues 1–25 (MPGPCASAAAFSCILVLLLLGCQRS) form the signal peptide. The Extracellular portion of the chain corresponds to 29 to 469 (AAGATVSSMR…LCPRKKLDWR (441 aa)). 4 N-linked (GlcNAc...) asparagine glycosylation sites follow: asparagine 147, asparagine 206, asparagine 368, and asparagine 390. A helical transmembrane segment spans residues 470–490 (YLVSGPLCALVVVVAIALLIK). Over 491 to 1163 (HYRYEQTLAG…RSAPSITFRL (673 aa)) the chain is Cytoplasmic. The 294-residue stretch at 507 to 800 (MKDVTVINLG…IRLVRMHLKE (294 aa)) folds into the Protein kinase domain. In terms of domain architecture, Guanylate cyclase spans 873-1003 (TILFSDIVGF…DTVNTASRME (131 aa)).

This sequence belongs to the adenylyl cyclase class-4/guanylyl cyclase family.

It localises to the membrane. It carries out the reaction GTP = 3',5'-cyclic GMP + diphosphate. The protein is Guanylate cyclase 32E (Gyc32E) of Drosophila melanogaster (Fruit fly).